Reading from the N-terminus, the 785-residue chain is Protein kintoun (785 aa).

Composition is skewed to basic and acidic residues over residues 622–638 (EHNE…RDTS) and 662–679 (HNIE…KEPK). Disordered stretches follow at residues 622–698 (EHNE…DSHL) and 719–749 (KSSV…ASSN). A compositionally biased stretch (polar residues) spans 681-695 (TSCTAESTSGQQPND). A compositionally biased stretch (acidic residues) spans 728-737 (SDLDEDDMPD).

It belongs to the PIH1 family. Kintoun subfamily.

The protein resides in the cytoplasm. The protein localises to the dynein axonemal particle. In terms of biological role, required for cytoplasmic pre-assembly of axonemal dyneins, thereby playing a central role in motility in cilia and flagella. Involved in pre-assembly of dynein arm complexes in the cytoplasm before intraflagellar transport loads them for the ciliary compartment. The protein is Protein kintoun of Xenopus tropicalis (Western clawed frog).